Here is a 113-residue protein sequence, read N- to C-terminus: CRISPR-associated endoribonuclease Cas2 2 (113 aa).

Asp32 provides a ligand contact to Mg(2+).

This sequence belongs to the CRISPR-associated endoribonuclease Cas2 protein family. In terms of assembly, homodimer, forms a heterotetramer with a Cas1 homodimer. Mg(2+) serves as cofactor.

In terms of biological role, CRISPR (clustered regularly interspaced short palindromic repeat), is an adaptive immune system that provides protection against mobile genetic elements (viruses, transposable elements and conjugative plasmids). CRISPR clusters contain sequences complementary to antecedent mobile elements and target invading nucleic acids. CRISPR clusters are transcribed and processed into CRISPR RNA (crRNA). Functions as a ssRNA-specific endoribonuclease. Involved in the integration of spacer DNA into the CRISPR cassette. The protein is CRISPR-associated endoribonuclease Cas2 2 (cas22) of Nitrosomonas europaea (strain ATCC 19718 / CIP 103999 / KCTC 2705 / NBRC 14298).